The chain runs to 430 residues: Serine hydroxymethyltransferase (430 aa).

Position 120 to 122 (120 to 122 (GHI)) interacts with (6S)-5,6,7,8-tetrahydrofolate. Lysine 226 carries the N6-(pyridoxal phosphate)lysine modification.

The protein belongs to the SHMT family. In terms of assembly, homodimer. The cofactor is pyridoxal 5'-phosphate.

Its subcellular location is the cytoplasm. It functions in the pathway amino-acid biosynthesis; glycine biosynthesis; glycine from L-serine: step 1/1. Its function is as follows. Catalyzes the reversible interconversion of serine and glycine with a modified folate serving as the one-carbon carrier. Also exhibits a pteridine-independent aldolase activity toward beta-hydroxyamino acids, producing glycine and aldehydes, via a retro-aldol mechanism. The protein is Serine hydroxymethyltransferase of Pyrobaculum islandicum (strain DSM 4184 / JCM 9189 / GEO3).